We begin with the raw amino-acid sequence, 305 residues long: Phosphoribosylaminoimidazole-succinocarboxamide synthase (305 aa).

The protein belongs to the SAICAR synthetase family.

It catalyses the reaction 5-amino-1-(5-phospho-D-ribosyl)imidazole-4-carboxylate + L-aspartate + ATP = (2S)-2-[5-amino-1-(5-phospho-beta-D-ribosyl)imidazole-4-carboxamido]succinate + ADP + phosphate + 2 H(+). It functions in the pathway purine metabolism; IMP biosynthesis via de novo pathway; 5-amino-1-(5-phospho-D-ribosyl)imidazole-4-carboxamide from 5-amino-1-(5-phospho-D-ribosyl)imidazole-4-carboxylate: step 1/2. The polypeptide is Phosphoribosylaminoimidazole-succinocarboxamide synthase (Albidiferax ferrireducens (strain ATCC BAA-621 / DSM 15236 / T118) (Rhodoferax ferrireducens)).